The following is a 125-amino-acid chain: Large-conductance mechanosensitive channel (125 aa).

2 helical membrane passes run 15–35 and 67–87; these read MDLA…NSLV and GSFL…FFLI.

Belongs to the MscL family. As to quaternary structure, homopentamer.

It is found in the cell membrane. Functionally, channel that opens in response to stretch forces in the membrane lipid bilayer. May participate in the regulation of osmotic pressure changes within the cell. This Lactobacillus gasseri (strain ATCC 33323 / DSM 20243 / BCRC 14619 / CIP 102991 / JCM 1131 / KCTC 3163 / NCIMB 11718 / NCTC 13722 / AM63) protein is Large-conductance mechanosensitive channel.